We begin with the raw amino-acid sequence, 210 residues long: ATP-dependent Clp protease proteolytic subunit (210 aa).

Catalysis depends on serine 106, which acts as the Nucleophile. Histidine 131 is an active-site residue.

This sequence belongs to the peptidase S14 family. In terms of assembly, fourteen ClpP subunits assemble into 2 heptameric rings which stack back to back to give a disk-like structure with a central cavity, resembling the structure of eukaryotic proteasomes.

The protein localises to the cytoplasm. The enzyme catalyses Hydrolysis of proteins to small peptides in the presence of ATP and magnesium. alpha-casein is the usual test substrate. In the absence of ATP, only oligopeptides shorter than five residues are hydrolyzed (such as succinyl-Leu-Tyr-|-NHMec, and Leu-Tyr-Leu-|-Tyr-Trp, in which cleavage of the -Tyr-|-Leu- and -Tyr-|-Trp bonds also occurs).. Cleaves peptides in various proteins in a process that requires ATP hydrolysis. Has a chymotrypsin-like activity. Plays a major role in the degradation of misfolded proteins. The sequence is that of ATP-dependent Clp protease proteolytic subunit from Rhodopseudomonas palustris (strain BisB18).